The primary structure comprises 448 residues: MAKHRYLPMTEQDEKEMLDVIGVKSIDDLFQDIPEKIRFKRDYDLKPAKSEPALLRELSKLASKNANTSEYASFLGAGVYSHYIPTVVDHVISRSEFYTAYTPYQPEISQGELQAIFEFQTMIAELTGMDLANSSMYDGGTALAEAAMLASGHTKRKKILISGAVHPESSNVLKTYATGQHIEVEVIPELDGKTDIEALKKALSDDIAGFVAQYPNFYGQVEPLAELEKLVHENNSLLLVSSNPLSLGLLTPPGEFGADIVVGDSQVFGIPESFGGPHCGFFAVTNKLMRKVPGRLVGETVDENGKRGYVLTLQAREQHIRRDKATSNICSNQALNALASSVAMATLGKTGLVEMAKQNLDKSHYAKQKFREKGFEVLFSDGFFNEFVVKLSKPIKEVNKSLLDEGIIGGYDLGFYEEKYKHHMLVAVTEMRTKEEIDAFVASLEGAK.

This sequence belongs to the GcvP family. N-terminal subunit subfamily. The glycine cleavage system is composed of four proteins: P, T, L and H. In this organism, the P 'protein' is a heterodimer of two subunits.

It catalyses the reaction N(6)-[(R)-lipoyl]-L-lysyl-[glycine-cleavage complex H protein] + glycine + H(+) = N(6)-[(R)-S(8)-aminomethyldihydrolipoyl]-L-lysyl-[glycine-cleavage complex H protein] + CO2. In terms of biological role, the glycine cleavage system catalyzes the degradation of glycine. The P protein binds the alpha-amino group of glycine through its pyridoxal phosphate cofactor; CO(2) is released and the remaining methylamine moiety is then transferred to the lipoamide cofactor of the H protein. The polypeptide is Probable glycine dehydrogenase (decarboxylating) subunit 1 (Listeria monocytogenes serovar 1/2a (strain ATCC BAA-679 / EGD-e)).